Consider the following 178-residue polypeptide: Large ribosomal subunit protein uL6 (178 aa).

It belongs to the universal ribosomal protein uL6 family. In terms of assembly, part of the 50S ribosomal subunit.

Functionally, this protein binds to the 23S rRNA, and is important in its secondary structure. It is located near the subunit interface in the base of the L7/L12 stalk, and near the tRNA binding site of the peptidyltransferase center. This chain is Large ribosomal subunit protein uL6, found in Levilactobacillus brevis (strain ATCC 367 / BCRC 12310 / CIP 105137 / JCM 1170 / LMG 11437 / NCIMB 947 / NCTC 947) (Lactobacillus brevis).